The following is a 58-amino-acid chain: UPF0434 protein Swoo_1821 (58 aa).

It belongs to the UPF0434 family.

In Shewanella woodyi (strain ATCC 51908 / MS32), this protein is UPF0434 protein Swoo_1821.